A 1648-amino-acid polypeptide reads, in one-letter code: Pleiotropic ABC efflux transporter of multiple drugs YBT1 (1648 aa).

A helical transmembrane segment spans residues Asn28–Ile48. Asn72 carries N-linked (GlcNAc...) asparagine glycosylation. Helical transmembrane passes span Val140–Glu160, Pro175–Asn195, Asn207–Phe227, and Leu250–Leu270. Asn306 carries an N-linked (GlcNAc...) asparagine glycan. The next 2 helical transmembrane spans lie at Phe352 to Val372 and Met392 to Cys412. Positions Cys361–Gln674 constitute an ABC transmembrane type-1 1 domain. Asn471 carries an N-linked (GlcNAc...) asparagine glycan. The next 2 helical transmembrane spans lie at Ile501–Ser521 and Ile523–Ile543. Asn573 carries N-linked (GlcNAc...) asparagine glycosylation. A run of 2 helical transmembrane segments spans residues Val612–Phe632 and Leu643–Leu662. One can recognise an ABC transporter 1 domain in the interval Leu706–Lys947. A glycan (N-linked (GlcNAc...) asparagine) is linked at Asn710. Residue Gly741–Thr748 participates in ATP binding. Residues Asn784 and Asn798 are each glycosylated (N-linked (GlcNAc...) asparagine). The chain crosses the membrane as a helical span at residues Met1012–Leu1032. One can recognise an ABC transmembrane type-1 2 domain in the interval Leu1032 to Met1333. Residue Asn1042 is glycosylated (N-linked (GlcNAc...) asparagine). The next 3 helical transmembrane spans lie at Ile1089 to Ile1109, Ile1168 to Ile1188, and Ala1191 to Leu1211. A glycan (N-linked (GlcNAc...) asparagine) is linked at Asn1255. Transmembrane regions (helical) follow at residues Leu1282–Ile1302 and Gly1305–Val1325. One can recognise an ABC transporter 2 domain in the interval Val1372 to Glu1622. The N-linked (GlcNAc...) asparagine glycan is linked to Asn1376. Residue Gly1406–Ser1413 participates in ATP binding. N-linked (GlcNAc...) asparagine glycosylation is found at Asn1503, Asn1524, and Asn1573.

The protein belongs to the ABC transporter superfamily. ABCC family. Conjugate transporter (TC 3.A.1.208) subfamily.

The protein localises to the membrane. Pleiotropic ABC efflux transporter that might be involved in the resistance to azoles such as fluconazole. In Candida glabrata (strain ATCC 2001 / BCRC 20586 / JCM 3761 / NBRC 0622 / NRRL Y-65 / CBS 138) (Yeast), this protein is Pleiotropic ABC efflux transporter of multiple drugs YBT1.